The following is a 353-amino-acid chain: Photosystem II D2 protein (353 aa).

Position 2 is an N-acetylthreonine (T2). At T2 the chain carries Phosphothreonine. A helical transmembrane segment spans residues 41–61; sequence CAYFALGGWLTGTTFVTSWYT. Residue H118 participates in chlorophyll a binding. Residues 125 to 141 form a helical membrane-spanning segment; that stretch reads GFMLRQFEIARSVQLRP. Pheophytin a is bound by residues Q130 and N143. The helical transmembrane segment at 153–166 threads the bilayer; sequence VFVSVFLIYPLGQS. Residue H198 participates in chlorophyll a binding. The chain crosses the membrane as a helical span at residues 208 to 228; it reads AALLCAIHGATVENTIFEDGD. A plastoquinone contacts are provided by H215 and F262. H215 provides a ligand contact to Fe cation. H269 is a binding site for Fe cation. Residues 279–295 traverse the membrane as a helical segment; it reads GLWMSAVGVVGLAVNLR.

The protein belongs to the reaction center PufL/M/PsbA/D family. In terms of assembly, PSII is composed of 1 copy each of membrane proteins PsbA, PsbB, PsbC, PsbD, PsbE, PsbF, PsbH, PsbI, PsbJ, PsbK, PsbL, PsbM, PsbT, PsbX, PsbY, PsbZ, Psb30/Ycf12, at least 3 peripheral proteins of the oxygen-evolving complex and a large number of cofactors. It forms dimeric complexes. It depends on The D1/D2 heterodimer binds P680, chlorophylls that are the primary electron donor of PSII, and subsequent electron acceptors. It shares a non-heme iron and each subunit binds pheophytin, quinone, additional chlorophylls, carotenoids and lipids. There is also a Cl(-1) ion associated with D1 and D2, which is required for oxygen evolution. The PSII complex binds additional chlorophylls, carotenoids and specific lipids. as a cofactor.

It localises to the plastid. The protein localises to the chloroplast thylakoid membrane. The enzyme catalyses 2 a plastoquinone + 4 hnu + 2 H2O = 2 a plastoquinol + O2. In terms of biological role, photosystem II (PSII) is a light-driven water:plastoquinone oxidoreductase that uses light energy to abstract electrons from H(2)O, generating O(2) and a proton gradient subsequently used for ATP formation. It consists of a core antenna complex that captures photons, and an electron transfer chain that converts photonic excitation into a charge separation. The D1/D2 (PsbA/PsbD) reaction center heterodimer binds P680, the primary electron donor of PSII as well as several subsequent electron acceptors. D2 is needed for assembly of a stable PSII complex. This is Photosystem II D2 protein from Chaetosphaeridium globosum (Charophycean green alga).